Consider the following 79-residue polypeptide: Large ribosomal subunit protein bL31 (79 aa).

The protein belongs to the bacterial ribosomal protein bL31 family. Type A subfamily. In terms of assembly, part of the 50S ribosomal subunit.

In terms of biological role, binds the 23S rRNA. This chain is Large ribosomal subunit protein bL31, found in Nostoc sp. (strain PCC 7120 / SAG 25.82 / UTEX 2576).